We begin with the raw amino-acid sequence, 640 residues long: Threonine--tRNA ligase (640 aa).

Residues 1–61 (MPTITLPDGS…ENDASLQIIT (61 aa)) form the TGS domain. The tract at residues 242–533 (DHRKIGKRLG…LIEHYEGAFP (292 aa)) is catalytic. Residues C333, H384, and H510 each contribute to the Zn(2+) site.

The protein belongs to the class-II aminoacyl-tRNA synthetase family. As to quaternary structure, homodimer. Requires Zn(2+) as cofactor.

It is found in the cytoplasm. The enzyme catalyses tRNA(Thr) + L-threonine + ATP = L-threonyl-tRNA(Thr) + AMP + diphosphate + H(+). Its function is as follows. Catalyzes the attachment of threonine to tRNA(Thr) in a two-step reaction: L-threonine is first activated by ATP to form Thr-AMP and then transferred to the acceptor end of tRNA(Thr). Also edits incorrectly charged L-seryl-tRNA(Thr). The sequence is that of Threonine--tRNA ligase from Pseudomonas syringae pv. syringae (strain B728a).